Consider the following 404-residue polypeptide: Cysteine desulfurase IscS (404 aa).

Residues 75 to 76 (AT), asparagine 155, glutamine 183, and 203 to 205 (SAH) contribute to the pyridoxal 5'-phosphate site. N6-(pyridoxal phosphate)lysine is present on lysine 206. Position 243 (threonine 243) interacts with pyridoxal 5'-phosphate. Residue cysteine 328 is the Cysteine persulfide intermediate of the active site. Cysteine 328 serves as a coordination point for [2Fe-2S] cluster.

It belongs to the class-V pyridoxal-phosphate-dependent aminotransferase family. NifS/IscS subfamily. In terms of assembly, homodimer. Forms a heterotetramer with IscU, interacts with other sulfur acceptors. It depends on pyridoxal 5'-phosphate as a cofactor.

It is found in the cytoplasm. The catalysed reaction is (sulfur carrier)-H + L-cysteine = (sulfur carrier)-SH + L-alanine. It functions in the pathway cofactor biosynthesis; iron-sulfur cluster biosynthesis. Its function is as follows. Master enzyme that delivers sulfur to a number of partners involved in Fe-S cluster assembly, tRNA modification or cofactor biosynthesis. Catalyzes the removal of elemental sulfur atoms from cysteine to produce alanine. Functions as a sulfur delivery protein for Fe-S cluster synthesis onto IscU, an Fe-S scaffold assembly protein, as well as other S acceptor proteins. In Vibrio vulnificus (strain CMCP6), this protein is Cysteine desulfurase IscS.